A 317-amino-acid chain; its full sequence is Transaldolase (317 aa).

The active-site Schiff-base intermediate with substrate is the Lys132.

It belongs to the transaldolase family. Type 1 subfamily. As to quaternary structure, homodimer.

It localises to the cytoplasm. The enzyme catalyses D-sedoheptulose 7-phosphate + D-glyceraldehyde 3-phosphate = D-erythrose 4-phosphate + beta-D-fructose 6-phosphate. It functions in the pathway carbohydrate degradation; pentose phosphate pathway; D-glyceraldehyde 3-phosphate and beta-D-fructose 6-phosphate from D-ribose 5-phosphate and D-xylulose 5-phosphate (non-oxidative stage): step 2/3. Functionally, transaldolase is important for the balance of metabolites in the pentose-phosphate pathway. The sequence is that of Transaldolase from Photorhabdus laumondii subsp. laumondii (strain DSM 15139 / CIP 105565 / TT01) (Photorhabdus luminescens subsp. laumondii).